A 396-amino-acid polypeptide reads, in one-letter code: MSKLKLNPYFGEYGGMYVPQILVPALKQLETAFVEAQEDDDFKAEFTDLLKNYAGRPTALTLTRNLSPNPMVKIYLKREDLLHGGAHKTNQVLGQALLAKRMGKKEIIAETGAGQHGVATALACALLGLKCKVYMGAKDVARQSPNVFRMRLMGAEVIPVTSGSATLKDACNEAMRDWSGSYEKAHYLLGTAAGPHPFPTIVREFQRIIGEETKKQMLEREGRLPDAVIACVGGGSNAIGMFADFIDEPSVELIGVEPAGKGIDTPMHGAPLKHGKTGIFFGMKAPLMQDREGQIEESYSISAGLDFPSVGPQHAHLNATGRARYESATDDEALEAFQQLARCEGIIPALESAHAIAYAVKMARECTKETILVVNLSGRGDKDIFTVSDILNGKEE.

At K88 the chain carries N6-(pyridoxal phosphate)lysine.

This sequence belongs to the TrpB family. In terms of assembly, tetramer of two alpha and two beta chains. Pyridoxal 5'-phosphate serves as cofactor.

The catalysed reaction is (1S,2R)-1-C-(indol-3-yl)glycerol 3-phosphate + L-serine = D-glyceraldehyde 3-phosphate + L-tryptophan + H2O. The protein operates within amino-acid biosynthesis; L-tryptophan biosynthesis; L-tryptophan from chorismate: step 5/5. Its function is as follows. The beta subunit is responsible for the synthesis of L-tryptophan from indole and L-serine. The sequence is that of Tryptophan synthase beta chain from Shewanella baltica (strain OS195).